Consider the following 376-residue polypeptide: Methionine import ATP-binding protein MetN 2 (376 aa).

The ABC transporter domain maps to 34–273 (VRFINLGKTY…PQHDVSKTLL (240 aa)). 70 to 77 (GRSGAGKS) contributes to the ATP binding site.

This sequence belongs to the ABC transporter superfamily. Methionine importer (TC 3.A.1.24) family. In terms of assembly, the complex is composed of two ATP-binding proteins (MetN), two transmembrane proteins (MetI) and a solute-binding protein (MetQ).

The protein resides in the cell inner membrane. The enzyme catalyses L-methionine(out) + ATP + H2O = L-methionine(in) + ADP + phosphate + H(+). It catalyses the reaction D-methionine(out) + ATP + H2O = D-methionine(in) + ADP + phosphate + H(+). Part of the ABC transporter complex MetNIQ involved in methionine import. Responsible for energy coupling to the transport system. This is Methionine import ATP-binding protein MetN 2 from Pseudomonas savastanoi pv. phaseolicola (strain 1448A / Race 6) (Pseudomonas syringae pv. phaseolicola (strain 1448A / Race 6)).